We begin with the raw amino-acid sequence, 62 residues long: MRDDTTTLRIQKELKKKFEELCESEELPLIKCANLLVSEALTRGYIIKERHELFEKLKKNNA.

This is an uncharacterized protein from Acidianus filamentous virus 2 (isolate Italy/Pozzuoli) (AFV-2).